The following is a 342-amino-acid chain: Phenylalanine--tRNA ligase alpha subunit (342 aa).

Residue Glu255 participates in Mg(2+) binding.

It belongs to the class-II aminoacyl-tRNA synthetase family. Phe-tRNA synthetase alpha subunit type 1 subfamily. Tetramer of two alpha and two beta subunits. The cofactor is Mg(2+).

Its subcellular location is the cytoplasm. It carries out the reaction tRNA(Phe) + L-phenylalanine + ATP = L-phenylalanyl-tRNA(Phe) + AMP + diphosphate + H(+). The polypeptide is Phenylalanine--tRNA ligase alpha subunit (Pelotomaculum thermopropionicum (strain DSM 13744 / JCM 10971 / SI)).